The chain runs to 435 residues: ATP-dependent protease ATPase subunit HslU (435 aa).

Residues Val18, 60 to 65 (GVGKTE), Asp248, Glu313, and Arg385 each bind ATP.

Belongs to the ClpX chaperone family. HslU subfamily. In terms of assembly, a double ring-shaped homohexamer of HslV is capped on each side by a ring-shaped HslU homohexamer. The assembly of the HslU/HslV complex is dependent on binding of ATP.

Its subcellular location is the cytoplasm. ATPase subunit of a proteasome-like degradation complex; this subunit has chaperone activity. The binding of ATP and its subsequent hydrolysis by HslU are essential for unfolding of protein substrates subsequently hydrolyzed by HslV. HslU recognizes the N-terminal part of its protein substrates and unfolds these before they are guided to HslV for hydrolysis. The polypeptide is ATP-dependent protease ATPase subunit HslU (Azorhizobium caulinodans (strain ATCC 43989 / DSM 5975 / JCM 20966 / LMG 6465 / NBRC 14845 / NCIMB 13405 / ORS 571)).